The primary structure comprises 980 residues: MSLEGNTLGKGAKSFPLYIAVNQYSKRMEDELNMKPGDKIKVITDDGEYNDGWYYGRNLRTKEEGLYPAVFTKRIAIEKPENLHKSPTQESGNSGVKYGNLNDSASNIGKVSSHQQENRYTSLKSTMSDIDKALEELRSGSVEQEVSKSPTRVPEVSTPQLQDEQTLIQEKTRNEENTTHDSLFSSTADLNLSSESLKNISKSNISTKSLEPSSESVRQLDLKMAKSWSPEEVTDYFSLVGFDQSTCNKFKEHQVSGKILLELELEHLKELEINSFGIRFQIFKEIRNIKSAIDSSSNKLDADYSTFAFENQAAQLMPAATVNRDEIQQQISSKCNKLSSESSDRKSSSVTTELQRPSSVVVNPNFKLHDPAEQILDMTEVPNLFADKDIFESPGRAPKPPSYPSPVQPPQSPSFNNRYTNNNARFPPQTTYPPKNKNPTVYSNGLIPNSSTSSDNSTGKFKFPAMNGHDSNSRKTTLTSATIPSINTVNTDESLPAISNISSNATSHHPNRNSVVYNNHKRTESGSSFVDLFNRISMLSPVKSSFDEEETKQPSKASRAVFDSARRKSSYGHSRDASLSEMKKHRRNSSILSFFSSKSQSNPTSPTKQTFTIDPAKMTSHSRSQSNSYSHARSQSYSHSRKHSLVTSPLKTSLSPINSKSNIALAHSETPTSSNNKEAVSQPSEGKHKHKHKHKSKHKHKNSSSKDGSSEEKSKKKLFSSTKESFVGSKEFKRSPSELTQKSTKSILPRSNAKKQQTSAFTEGIRSITAKESMQTADCSGWMSKKGTGAMGTWKQRFFTLHGTRLSYFTNTNDEKERGLIDITAHRVLPASDDDRLISLYAASLGKGKYCFKLVPPQPGSKKGLTFTEPRVHYFAVENKSEMKAWLSAIIKATIDIDTSVPVISSYATPTIPLSKAQTLLEEARLQTQLRDAEEEEGRDQFGWDDTQNKRNSNYPIEQDQFETSDYLESSAFEYPGGRL.

Residues lysine 13–isoleucine 77 form the SH3 domain. Phosphoserine is present on residues serine 104, serine 106, and serine 128. The interval serine 139–aspartate 163 is disordered. Positions serine 141–proline 150 are enriched in polar residues. Residues threonine 151 and threonine 158 each carry the phosphothreonine modification. At serine 209 the chain carries Phosphoserine. An SAM domain is found at tryptophan 228 to alanine 292. Disordered stretches follow at residues serine 333–arginine 356 and isoleucine 390–asparagine 438. Residues serine 393 and serine 412 each carry the phosphoserine modification. Residues alanine 397–serine 412 show a composition bias toward pro residues. Residues phenylalanine 415–asparagine 438 are compositionally biased toward polar residues. Serine 525 and serine 528 each carry phosphoserine. The tract at residues serine 544 to threonine 762 is disordered. Basic and acidic residues predominate over residues histidine 573 to methionine 582. Phosphoserine occurs at positions 589, 590, and 593. Low complexity-rich tracts occupy residues serine 589–lysine 608 and histidine 621–serine 638. Residues serine 644 and serine 655 each carry the phosphoserine modification. Composition is skewed to polar residues over residues leucine 645–asparagine 662 and glutamate 669–proline 683. Residues lysine 687 to serine 703 show a composition bias toward basic residues. Residue serine 735 is modified to Phosphoserine. Polar residues predominate over residues serine 737–serine 746. Residues threonine 776–isoleucine 895 enclose the PH domain. Threonine 919 bears the Phosphothreonine mark. A disordered region spans residues leucine 930–leucine 980. Over residues lysine 950–leucine 968 the composition is skewed to polar residues.

In terms of assembly, interacts with BEM1.

Its subcellular location is the bud. It localises to the bud neck. In terms of biological role, functions redundantly with BOI2 to promote the fusion of secretory vesicles with the plasma membrane at sites of polarized growth. This is BEM1-interacting protein 1 from Saccharomyces cerevisiae (strain ATCC 204508 / S288c) (Baker's yeast).